We begin with the raw amino-acid sequence, 308 residues long: Uridine diphosphate glucose pyrophosphatase NUDT22 (308 aa).

Substrate is bound by residues phenylalanine 56, tyrosine 86, arginine 138, alanine 143, aspartate 150, histidine 155, and glutamate 157. Positions 117 to 284 constitute a Nudix hydrolase domain; the sequence is ADPLGVGAAL…KGAILLYNRH (168 aa). The short motif at 174–195 is the Nudix box element; the sequence is GLLVVRELFSSVLQEICDEVNL. Positions 188 and 192 each coordinate Mg(2+). Serine 273 is a binding site for substrate.

This sequence belongs to the Nudix hydrolase family. The cofactor is Mg(2+).

The catalysed reaction is UDP-sugar + H2O = UMP + alpha-D-aldose 1-phosphate.. Functionally, hydrolyzes UDP-glucose to glucose 1-phosphate and UMP and UDP-galactose to galactose 1-phosphate and UMP. Preferred substrate is UDP-glucose. The sequence is that of Uridine diphosphate glucose pyrophosphatase NUDT22 (Nudt22) from Mus musculus (Mouse).